The following is a 200-amino-acid chain: MSFSPLIRQLIDAFRVLPGVGQKTAQRMALQLLERDRSGGSRLALALGQAMDGVGHCRLCRTLTEEELCPQCSDLRRNDTLLCVVEGPTDVYAVEQTGYRGRYFVLKGHLSPLDGLGPEAIGIPQLMERISQQATFTEVILATNPTVEGEATAHYIAQLLHDKGLVASRIAHGVPLGGELDLVDGGTLAHSFAGRKPIAL.

The C4-type zinc finger occupies 57-72 (CRLCRTLTEEELCPQC). The region spanning 80–175 (TLLCVVEGPT…VASRIAHGVP (96 aa)) is the Toprim domain.

It belongs to the RecR family.

Its function is as follows. May play a role in DNA repair. It seems to be involved in an RecBC-independent recombinational process of DNA repair. It may act with RecF and RecO. The polypeptide is Recombination protein RecR (Pseudomonas syringae pv. tomato (strain ATCC BAA-871 / DC3000)).